The primary structure comprises 41 residues: uncharacterized protein (41 aa).

The segment at 19 to 41 is disordered; the sequence is NSTRNSSSSSRSSYSSRTTVFSL.

This is an uncharacterized protein from Dictyostelium discoideum (Social amoeba).